A 1569-amino-acid chain; its full sequence is Zinc finger protein GLI3 (1569 aa).

2 stretches are compositionally biased toward polar residues: residues 1–10 (MEAQSRSTTA) and 416–432 (AAQQ…SSTG). Disordered regions lie at residues 1–79 (MEAQ…STSS) and 414–461 (SEAA…DQPD). 5 consecutive C2H2-type zinc fingers follow at residues 485–510 (TNCH…NNDH), 518–545 (FVCR…MRRH), 551–575 (HKCT…LRSH), 581–606 (YVCE…NRTH), and 612–637 (YVCK…KTVH). 4 disordered regions span residues 625–731 (DPSS…YTNS), 899–921 (SYDP…DGLP), 1202–1228 (PKSG…QNLD), and 1335–1364 (SNQT…GEQQ). The span at 637–653 (HGPEAHVTKKQRGDIHP) shows a compositional bias: basic and acidic residues. A compositionally biased stretch (polar residues) spans 663-676 (SHSQSRSPGQQTQG). The segment covering 678-704 (HGEHKDLSNTTSKHEECLQVRSVKTEK) has biased composition (basic and acidic residues). A compositionally biased stretch (polar residues) spans 705–731 (PMSSQPSPGGKSSCSRQQSPISNYTNS). Residues 1335-1350 (SNQTTSGQNGNTTDGT) are compositionally biased toward low complexity. Polar residues predominate over residues 1352 to 1364 (SFLSTTQNGGEQQ).

Belongs to the GLI C2H2-type zinc-finger protein family. In terms of processing, phosphorylation is essential for its proteolytic processing. Post-translationally, the repressor form (GLI3R), a C-terminally truncated form is generated from the full-length GLI3 protein (GLI3FL) through proteolytic processing.

The protein localises to the nucleus. It localises to the cytoplasm. Has a dual function as a transcriptional activator and a repressor of the sonic hedgehog (Shh) pathway, and may play a role in limb development. May bind to the minimal GLI-consensus sequence 5'-GGGTGGTC-3'. Has an essential role in the early embryonic patterning of mesoderm and neuroectoderm. The sequence is that of Zinc finger protein GLI3 (gli3) from Xenopus laevis (African clawed frog).